A 491-amino-acid chain; its full sequence is Probable cobyric acid synthase (491 aa).

In terms of domain architecture, GATase cobBQ-type spans 252–444 (PVEVNIVKFS…LHGILENFEF (193 aa)). Cys-330 functions as the Nucleophile in the catalytic mechanism. His-436 is a catalytic residue.

The protein belongs to the CobB/CobQ family. CobQ subfamily.

It participates in cofactor biosynthesis; adenosylcobalamin biosynthesis. Its function is as follows. Catalyzes amidations at positions B, D, E, and G on adenosylcobyrinic A,C-diamide. NH(2) groups are provided by glutamine, and one molecule of ATP is hydrogenolyzed for each amidation. This Methanococcus vannielii (strain ATCC 35089 / DSM 1224 / JCM 13029 / OCM 148 / SB) protein is Probable cobyric acid synthase.